We begin with the raw amino-acid sequence, 427 residues long: N-acylglucosamine 2-epimerase (427 aa).

Residues 195–216 are leucine-zipper; the sequence is LLNLVEQLGEADEELAGKYAEL.

This sequence belongs to the N-acylglucosamine 2-epimerase family. As to quaternary structure, homodimer. Forms a heterodimer with renin and inhibits its activity.

The enzyme catalyses an N-acyl-D-glucosamine = an N-acyl-D-mannosamine. It participates in amino-sugar metabolism; N-acetylneuraminate degradation. Inhibited by N-ethylmaleimide, 5,5'-dithiobis-2-nitrobenzoate and iodoacetic acid. Its function is as follows. Catalyzes the interconversion of N-acetylglucosamine to N-acetylmannosamine. Involved in the N-glycolylneuraminic acid (Neu5Gc) degradation pathway: although human is not able to catalyze formation of Neu5Gc due to the inactive CMAHP enzyme, Neu5Gc is present in food and must be degraded. The sequence is that of N-acylglucosamine 2-epimerase (RENBP) from Homo sapiens (Human).